Reading from the N-terminus, the 265-residue chain is Mlc titration factor A (265 aa).

Positions 111, 148, 152, and 211 each coordinate Zn(2+).

This sequence belongs to the MtfA family. As to quaternary structure, interacts with Mlc. Zn(2+) is required as a cofactor.

It localises to the cytoplasm. Its function is as follows. Involved in the modulation of the activity of the glucose-phosphotransferase system (glucose-PTS). Interacts with the transcriptional repressor Mlc, preventing its interaction with DNA and leading to the modulation of expression of genes regulated by Mlc, including ptsG, which encodes the PTS system glucose-specific EIICB component. Functionally, shows zinc-dependent metallopeptidase activity. This chain is Mlc titration factor A, found in Escherichia coli (strain 55989 / EAEC).